We begin with the raw amino-acid sequence, 434 residues long: Galactofuranosyl glycosyltransferase (434 aa).

Over 1 to 18 (MAPPRWHHDRRRMAIFVR) the chain is Cytoplasmic. A helical; Signal-anchor for type II membrane protein transmembrane segment spans residues 19–38 (VGLYTLLFLMGYVVPLIIFY). 4 N-linked (GlcNAc...) asparagine glycosylation sites follow: N39, N100, N162, and N388. At 39 to 434 (NRSRADTFED…KLLDFPVDPS (396 aa)) the chain is on the lumenal side.

This sequence belongs to the glycosyltransferase 2 family.

The protein resides in the endoplasmic reticulum membrane. It participates in glycolipid biosynthesis; glycosylphosphatidylinositol-anchor biosynthesis. In terms of biological role, glycosyltransferase that may be responsible for the addition of galactofuranosyl residues to the nascent lipophosphoglycan (LPG) chain. It could alternatively be involved in the synthesis of the galactofuranosyl donor. This chain is Galactofuranosyl glycosyltransferase (LPG1), found in Leishmania donovani.